The primary structure comprises 562 residues: MSGTILENLSGRKLSILVGSLLLCQVLCFLLGGLYAPVPAGHTNVLGSLCRENHARQNDTSFFLYSRGEGSCTQVTREEVEQDSMKLANQIVHVFQMPLPRDSRVLDYSRWQQNLIGVLQVEFGYDSSSELREPPKELQLTIDMRLAYRNKGDPDHAWKLYAHGVEHRYLDCVAAHIGSSETLYTCDMIPLFELGALHHSFYLLNLRFPLDTPKQMNLQFGHMHDLTLTAIHQNGGFTHVWLMLKTLLFPFVVGIMVWFWRRVHLLQRSPALLEYMLLYLGGALTFLNLPLEYLSLTIEMPYMLLLSDIRQGIFYAMLLSFWLVFAGEHMLIQDSSNKSTIRSRYWKHLSAVVVGCISLFVFDISERGVQLRNPFYSIWTTPLGAKVAMSFILLAGVSAAVYFLFLCYMISKVFKNIGDKRTSLPSMSQARRLHYEGLIYRFKFLMLATLLCAALTVTGFIMGQMAEGQWKWNDDVEIQLTSAFLTGVYGMWNIYIFALLILYAPSHKQWPTMHHSDETTQSNENIVASAASEEIEFSNLPSDSNPSEISSLTSFTRKVAFE.

Over 1 to 13 the chain is Cytoplasmic; it reads MSGTILENLSGRK. Residues 14–34 form a helical membrane-spanning segment; the sequence is LSILVGSLLLCQVLCFLLGGL. Residues 35-239 are Lumenal-facing; that stretch reads YAPVPAGHTN…AIHQNGGFTH (205 aa). N-linked (GlcNAc...) asparagine glycosylation occurs at Asn58. Residues 240–260 traverse the membrane as a helical segment; sequence VWLMLKTLLFPFVVGIMVWFW. Over 261 to 270 the chain is Cytoplasmic; the sequence is RRVHLLQRSP. Residues 271–291 traverse the membrane as a helical segment; that stretch reads ALLEYMLLYLGGALTFLNLPL. The Lumenal portion of the chain corresponds to 292 to 311; sequence EYLSLTIEMPYMLLLSDIRQ. Residues 312 to 332 traverse the membrane as a helical segment; that stretch reads GIFYAMLLSFWLVFAGEHMLI. The Cytoplasmic segment spans residues 333 to 344; that stretch reads QDSSNKSTIRSR. A helical transmembrane segment spans residues 345 to 365; it reads YWKHLSAVVVGCISLFVFDIS. Residues 366 to 386 lie on the Lumenal side of the membrane; the sequence is ERGVQLRNPFYSIWTTPLGAK. A helical transmembrane segment spans residues 387–407; the sequence is VAMSFILLAGVSAAVYFLFLC. The Cytoplasmic portion of the chain corresponds to 408-441; the sequence is YMISKVFKNIGDKRTSLPSMSQARRLHYEGLIYR. The helical transmembrane segment at 442–462 threads the bilayer; it reads FKFLMLATLLCAALTVTGFIM. Over 463-482 the chain is Lumenal; the sequence is GQMAEGQWKWNDDVEIQLTS. A helical transmembrane segment spans residues 483–503; it reads AFLTGVYGMWNIYIFALLILY. Residues 504-562 lie on the Cytoplasmic side of the membrane; sequence APSHKQWPTMHHSDETTQSNENIVASAASEEIEFSNLPSDSNPSEISSLTSFTRKVAFE. The segment at 538 to 562 is disordered; that stretch reads SNLPSDSNPSEISSLTSFTRKVAFE. Residues 539 to 556 are compositionally biased toward polar residues; the sequence is NLPSDSNPSEISSLTSFT.

It belongs to the wntless family. In terms of assembly, interacts with wg; in the Golgi. Interacts with Vps35, a component of the retromer complex; wls stability is regulated by Vps35.

Its subcellular location is the presynaptic cell membrane. The protein localises to the postsynaptic cell membrane. It localises to the cell membrane. The protein resides in the endoplasmic reticulum membrane. It is found in the endosome membrane. Its subcellular location is the golgi apparatus membrane. A segment polarity gene required for wingless (wg)-dependent patterning processes, acting in both wg-sending cells and wg-target cells. In non-neuronal cells wls directs wg secretion. The wls traffic loop encompasses the Golgi, the cell surface, an endocytic compartment and a retrograde route leading back to the Golgi, and involves clathrin-mediated endocytosis and the retromer complex (a conserved protein complex consisting of Vps35 and Vps26). In neuronal cells (the larval motorneuron NMJ), the wg signal moves across the synapse via the release of wls-containing exosome-like vesicles. Postsynaptic wls is required for the trafficking of fz2 through the fz2-interacting protein Grip. This is Protein wntless from Drosophila pseudoobscura pseudoobscura (Fruit fly).